Here is a 389-residue protein sequence, read N- to C-terminus: Nucleic acid dioxygenase ALKBH1 (389 aa).

The segment at 86-389 (SKWQAYGLKG…VKRARINPDS (304 aa)) is tRNA-binding. Substrate-binding positions include Trp-144 and 175-177 (YHY). The region spanning 208–347 (GFEDFRAEAG…RVNMTVRQVL (140 aa)) is the Fe2OG dioxygenase domain. 220–222 (NYY) is a binding site for 2-oxoglutarate. Positions 231, 233, and 287 each coordinate Fe cation. Residue Asp-233 coordinates substrate. 338–344 (RVNMTVR) serves as a coordination point for 2-oxoglutarate.

Belongs to the alkB family. In terms of assembly, monomer. Interacts with DNAJB6. The cofactor is Fe(2+). In terms of tissue distribution, ubiquitous.

The protein localises to the nucleus. It is found in the mitochondrion. The enzyme catalyses 2'-deoxyribonucleotide-(2'-deoxyribose 5'-phosphate)-2'-deoxyribonucleotide-DNA = a 3'-end 2'-deoxyribonucleotide-(2,3-dehydro-2,3-deoxyribose 5'-phosphate)-DNA + a 5'-end 5'-phospho-2'-deoxyribonucleoside-DNA + H(+). It carries out the reaction a methylated nucleobase within DNA + 2-oxoglutarate + O2 = a nucleobase within DNA + formaldehyde + succinate + CO2. It catalyses the reaction an N(6)-methyl-2'-deoxyadenosine in DNA + 2-oxoglutarate + O2 = a 2'-deoxyadenosine in DNA + formaldehyde + succinate + CO2. The catalysed reaction is an N(1)-methyladenosine in tRNA + 2-oxoglutarate + O2 = an adenosine in tRNA + formaldehyde + succinate + CO2. The enzyme catalyses 5-methylcytidine(34) in mitochondrial tRNA(Met) + 2 2-oxoglutarate + 2 O2 = 5-formylcytidine(34) in mitochondrial tRNA(Met) + 2 succinate + 2 CO2 + H2O. It carries out the reaction an N(3)-methylcytidine in mRNA + 2-oxoglutarate + O2 = a cytidine in mRNA + formaldehyde + succinate + CO2. It catalyses the reaction N(1)-methyladenosine(58) in tRNA + 2-oxoglutarate + O2 = adenosine(58) in tRNA + formaldehyde + succinate + CO2. Dioxygenase that acts on nucleic acids, such as DNA and tRNA. Requires molecular oxygen, alpha-ketoglutarate and iron. A number of activities have been described for this dioxygenase, but recent results suggest that it mainly acts on tRNAs and mediates their demethylation or oxidation depending on the context and subcellular compartment. Mainly acts as a tRNA demethylase by removing N(1)-methyladenine from various tRNAs, with a preference for N(1)-methyladenine at position 58 (m1A58) present on a stem loop structure of tRNAs. Acts as a regulator of translation initiation and elongation in response to glucose deprivation: regulates both translation initiation, by mediating demethylation of tRNA(Met), and translation elongation, N(1)-methyladenine-containing tRNAs being preferentially recruited to polysomes to promote translation elongation. In mitochondrion, specifically interacts with mt-tRNA(Met) and mediates oxidation of mt-tRNA(Met) methylated at cytosine(34) to form 5-formylcytosine (f(5)c) at this position. mt-tRNA(Met) containing the f(5)c modification at the wobble position enables recognition of the AUA codon in addition to the AUG codon, expanding codon recognition in mitochondrial translation. Specifically demethylates DNA methylated on the 6th position of adenine (N(6)-methyladenosine) DNA. N(6)-methyladenosine (m6A) DNA is present at some L1 elements in embryonic stem cells and probably promotes their silencing. Demethylates mRNAs containing N(3)-methylcytidine modification. Also able to repair alkylated single-stranded DNA by oxidative demethylation, but with low activity. Also has DNA lyase activity and introduces double-stranded breaks at abasic sites: cleaves both single-stranded DNA and double-stranded DNA at abasic sites, with the greatest activity towards double-stranded DNA with two abasic sites. DNA lyase activity does not require alpha-ketoglutarate and iron and leads to the formation of an irreversible covalent protein-DNA adduct with the 5' DNA product. DNA lyase activity is not required during base excision repair and class switch recombination of the immunoglobulin heavy chain during B lymphocyte activation. May play a role in placental trophoblast lineage differentiation. The protein is Nucleic acid dioxygenase ALKBH1 of Homo sapiens (Human).